The primary structure comprises 347 residues: tRNA N6-adenosine threonylcarbamoyltransferase (347 aa).

The Fe cation site is built by His115 and His119. Residues 137–141, Asp170, Gly183, and Asn281 contribute to the substrate site; that span reads LASGG. Asp309 is a binding site for Fe cation.

The protein belongs to the KAE1 / TsaD family. Fe(2+) serves as cofactor.

The protein resides in the cytoplasm. It carries out the reaction L-threonylcarbamoyladenylate + adenosine(37) in tRNA = N(6)-L-threonylcarbamoyladenosine(37) in tRNA + AMP + H(+). In terms of biological role, required for the formation of a threonylcarbamoyl group on adenosine at position 37 (t(6)A37) in tRNAs that read codons beginning with adenine. Is involved in the transfer of the threonylcarbamoyl moiety of threonylcarbamoyl-AMP (TC-AMP) to the N6 group of A37, together with TsaE and TsaB. TsaD likely plays a direct catalytic role in this reaction. In Methylorubrum populi (strain ATCC BAA-705 / NCIMB 13946 / BJ001) (Methylobacterium populi), this protein is tRNA N6-adenosine threonylcarbamoyltransferase.